The following is a 339-amino-acid chain: Adenylosuccinate synthetase (339 aa).

GTP-binding positions include 12 to 18 and 42 to 44; these read GDEGKGS and GHS. Catalysis depends on aspartate 13, which acts as the Proton acceptor. Positions 13 and 42 each coordinate Mg(2+). Residues 13–16, 40–43, threonine 127, arginine 141, glutamine 179, threonine 194, and arginine 256 each bind IMP; these read DEGK and NAGH. The active-site Proton donor is histidine 43. 252-258 contacts substrate; it reads TVTGRRR. Residues arginine 258, 284 to 286, and 324 to 326 each bind GTP; these read MLD and KTG.

It belongs to the adenylosuccinate synthetase family. As to quaternary structure, homodimer. Mg(2+) serves as cofactor.

Its subcellular location is the cytoplasm. It carries out the reaction IMP + L-aspartate + GTP = N(6)-(1,2-dicarboxyethyl)-AMP + GDP + phosphate + 2 H(+). The protein operates within purine metabolism; AMP biosynthesis via de novo pathway; AMP from IMP: step 1/2. Functionally, plays an important role in the de novo pathway of purine nucleotide biosynthesis. Catalyzes the first committed step in the biosynthesis of AMP from IMP. The polypeptide is Adenylosuccinate synthetase (Thermococcus sibiricus (strain DSM 12597 / MM 739)).